A 322-amino-acid polypeptide reads, in one-letter code: Formimidoylglutamase (322 aa).

Residues histidine 130, aspartate 156, histidine 158, aspartate 160, cysteine 244, and aspartate 246 each contribute to the Mn(2+) site.

Belongs to the arginase family. Mn(2+) is required as a cofactor.

The enzyme catalyses N-formimidoyl-L-glutamate + H2O = formamide + L-glutamate. Its pathway is amino-acid degradation; L-histidine degradation into L-glutamate; L-glutamate from N-formimidoyl-L-glutamate (hydrolase route): step 1/1. In terms of biological role, catalyzes the conversion of N-formimidoyl-L-glutamate to L-glutamate and formamide. This is Formimidoylglutamase from Geobacillus thermodenitrificans (strain NG80-2).